The sequence spans 207 residues: Fibroblast growth factor 18 (207 aa).

The N-terminal stretch at 1 to 27 is a signal peptide; the sequence is MYSAPSTCTCLCLHFLLLCFQVQVLAA. The N-linked (GlcNAc...) asparagine glycan is linked to asparagine 39. Cysteines 109 and 127 form a disulfide. A glycan (N-linked (GlcNAc...) asparagine) is linked at asparagine 137.

Belongs to the heparin-binding growth factors family. Interacts with FGFR3 and FGFR4.

Its subcellular location is the secreted. Its function is as follows. Plays an important role in the regulation of cell proliferation, cell differentiation and cell migration. Required for normal ossification and bone development. Stimulates hepatic and intestinal proliferation. The sequence is that of Fibroblast growth factor 18 (FGF18) from Bos taurus (Bovine).